An 87-amino-acid polypeptide reads, in one-letter code: Small ribosomal subunit protein bS20 (87 aa).

Residues 1-26 (MANIKSAKKRAVQSEKARKHNASRRS) form a disordered region.

This sequence belongs to the bacterial ribosomal protein bS20 family.

Binds directly to 16S ribosomal RNA. This Klebsiella pneumoniae (strain 342) protein is Small ribosomal subunit protein bS20.